The following is a 174-amino-acid chain: Keratin-associated protein 1-5 (174 aa).

The tract at residues 3 to 172 (CCQTSFCGYP…CCRPVCCCEP (170 aa)) is 15 X 5 AA repeats of C-C-[QEPVRC]-[TPIVLE]-[SRHVP].

It belongs to the KRTAP type 1 family. In terms of assembly, interacts with hair keratins. As to expression, expressed in the middle/upper portions of the hair cortex, in the region termed the keratogenous zone.

In the hair cortex, hair keratin intermediate filaments are embedded in an interfilamentous matrix, consisting of hair keratin-associated proteins (KRTAP), which are essential for the formation of a rigid and resistant hair shaft through their extensive disulfide bond cross-linking with abundant cysteine residues of hair keratins. The matrix proteins include the high-sulfur and high-glycine-tyrosine keratins. The protein is Keratin-associated protein 1-5 (KRTAP1-5) of Homo sapiens (Human).